We begin with the raw amino-acid sequence, 427 residues long: MFLCLIVGKPARGAEILDRLGFVRSKQNVLAIVLAGGEGKRLFPLTEDRAKPAVPFGGTYRLIDFVLSNLVNAGYLKICVLTQYKSHSLDRHISQAWQFSGPTSQYIASVPAQQRLGKRWYMGSADAILQSLNLVYDERPDYVLVFGADHVYRMDPEQMVADHIASGKAVTVAGIRVPRSEASAFGCIQADENNNITEFLEKPADPPGTPDDPSMTFASMGNYVFSTDALIQALKEDENNPDSEHDMGGDIIPYFVSMGQANVYDFNKNVVPGSTDRDRAYWRDVGTVDAFYEAHMDLISVHPVFNLYNQQWPIRSTERGDLPPAKFVQGGIAQASMVAQGSIVSGSTVRNSVVSTDVVVEEGATVEGSVIMPGARIGKGAVVRHCILDKNVVVSDGQVIGVDRERDEQRFQISPGGVVVVGKNFVV.

Alpha-D-glucose 1-phosphate contacts are provided by residues tyrosine 121, glycine 186, 201–202 (EK), and serine 219.

Belongs to the bacterial/plant glucose-1-phosphate adenylyltransferase family. Homotetramer.

The enzyme catalyses alpha-D-glucose 1-phosphate + ATP + H(+) = ADP-alpha-D-glucose + diphosphate. It participates in glycan biosynthesis; glycogen biosynthesis. Its function is as follows. Involved in the biosynthesis of ADP-glucose, a building block required for the elongation reactions to produce glycogen. Catalyzes the reaction between ATP and alpha-D-glucose 1-phosphate (G1P) to produce pyrophosphate and ADP-Glc. This Corynebacterium diphtheriae (strain ATCC 700971 / NCTC 13129 / Biotype gravis) protein is Glucose-1-phosphate adenylyltransferase.